The following is a 462-amino-acid chain: Glutamate--tRNA ligase 2 (462 aa).

The 'HIGH' region signature appears at 8–18; that stretch reads PSPTGLLHVGG. The 'KMSKS' region signature appears at 227–231; that stretch reads PLSKR. Lys-230 provides a ligand contact to ATP.

The protein belongs to the class-I aminoacyl-tRNA synthetase family. Glutamate--tRNA ligase type 1 subfamily. As to quaternary structure, monomer.

It is found in the cytoplasm. It catalyses the reaction tRNA(Glu) + L-glutamate + ATP = L-glutamyl-tRNA(Glu) + AMP + diphosphate. Functionally, catalyzes the attachment of glutamate to tRNA(Glu) in a two-step reaction: glutamate is first activated by ATP to form Glu-AMP and then transferred to the acceptor end of tRNA(Glu). This Thermosipho melanesiensis (strain DSM 12029 / CIP 104789 / BI429) protein is Glutamate--tRNA ligase 2.